The sequence spans 1066 residues: Hemoglobin and hemoglobin-haptoglobin-binding protein C (1066 aa).

The first 24 residues, Met1–Ala24, serve as a signal peptide directing secretion. 7 repeat units span residues Gln26 to Asn29, Gln30 to Asn33, Gln34 to Asn37, Gln38 to Asn41, Gln42 to Asn45, Gln46 to Asn49, and Gln50 to Asn53. The tract at residues Gln26–Asn53 is 7 X 4 AA tandem repeats of Q-P-T-N. Low complexity predominate over residues Gln26–Gln54. Positions Gln26–Asn57 are disordered. Residues Glu63 to Ser70 carry the TonB box motif. In terms of domain architecture, TBDR plug spans Asn66–Lys200. The TBDR beta-barrel domain maps to Asp208–Phe1066. Positions Asn1049 to Phe1066 match the TonB C-terminal box motif.

The protein belongs to the TonB-dependent receptor family. Hemoglobin/haptoglobin binding protein subfamily.

It is found in the cell outer membrane. Functionally, acts as a receptor for hemoglobin or the hemoglobin/haptoglobin complex of the human host and is required for heme uptake. In Haemophilus influenzae, this protein is Hemoglobin and hemoglobin-haptoglobin-binding protein C (hgpC).